We begin with the raw amino-acid sequence, 485 residues long: Probable protein phosphatase 2C 3 (485 aa).

The span at 1–11 (MSSPSPSSEAA) shows a compositional bias: low complexity. Disordered regions lie at residues 1 to 29 (MSSP…AAGG) and 43 to 72 (ARAE…AEGG). A compositionally biased stretch (basic residues) spans 13-23 (AHHHHHQRRQH). The PPM-type phosphatase domain maps to 107–353 (SSSSSSSLAS…DDTTCIVVDM (247 aa)). Residues Asp-129, Gly-130, Asp-305, and Asp-344 each coordinate Mn(2+).

This sequence belongs to the PP2C family. Mg(2+) is required as a cofactor. Requires Mn(2+) as cofactor.

The enzyme catalyses O-phospho-L-seryl-[protein] + H2O = L-seryl-[protein] + phosphate. It carries out the reaction O-phospho-L-threonyl-[protein] + H2O = L-threonyl-[protein] + phosphate. In Oryza sativa subsp. japonica (Rice), this protein is Probable protein phosphatase 2C 3.